The primary structure comprises 658 residues: Probable mitochondrial Rho GTPase gemA (658 aa).

The Cytoplasmic segment spans residues 1-633 (MKNNIKVILI…NGSNGSNNSN (633 aa)). The region spanning 2–175 (KNNIKVILIG…LYASQTSVFF (174 aa)) is the Miro 1 domain. GTP is bound by residues 11–18 (GDEQVGKS), 57–62 (DTFDDG), and 118–121 (NKLD). 2 consecutive EF-hand domains span residues 191 to 226 (GCER…CGHE) and 311 to 346 (MGNE…TPKI). Residues Asp-204, Asp-206, Asp-208, Ser-210, Glu-215, Asp-324, Asp-326, Asp-328, and Asp-335 each coordinate Ca(2+). The Miro 2 domain occupies 420–616 (RNIVNCYVFG…YHEMMETIVN (197 aa)). Residues 429-436 (GAEAVGKT), 466-468 (LLK), and 530-533 (TKNN) each bind GTP. The segment at 532–575 (NNNNNNNNNNNNNNNNNNNNLNNNNNNINNNNNNNNNNTTTTNA) is disordered. The chain crosses the membrane as a helical; Anchor for type IV membrane protein span at residues 634–656 (ILTYLVIAAGVAGVGLLLSKYLA). The Mitochondrial intermembrane portion of the chain corresponds to 657 to 658 (KK).

This sequence belongs to the mitochondrial Rho GTPase family.

It localises to the mitochondrion outer membrane. Functionally, mitochondrial GTPase involved in mitochondrial trafficking. Probably involved in control of anterograde transport of mitochondria and their subcellular distribution. The protein is Probable mitochondrial Rho GTPase gemA (gemA) of Dictyostelium discoideum (Social amoeba).